We begin with the raw amino-acid sequence, 121 residues long: Large ribosomal subunit protein bL12 (121 aa).

This sequence belongs to the bacterial ribosomal protein bL12 family. Homodimer. Part of the ribosomal stalk of the 50S ribosomal subunit. Forms a multimeric L10(L12)X complex, where L10 forms an elongated spine to which 2 to 4 L12 dimers bind in a sequential fashion. Binds GTP-bound translation factors.

Forms part of the ribosomal stalk which helps the ribosome interact with GTP-bound translation factors. Is thus essential for accurate translation. This chain is Large ribosomal subunit protein bL12, found in Streptococcus agalactiae serotype V (strain ATCC BAA-611 / 2603 V/R).